The primary structure comprises 386 residues: Succinyl-diaminopimelate desuccinylase (386 aa).

Zn(2+) is bound at residue H73. The active site involves D75. D106 is a binding site for Zn(2+). E140 functions as the Proton acceptor in the catalytic mechanism. Positions 141, 169, and 355 each coordinate Zn(2+).

Belongs to the peptidase M20A family. DapE subfamily. As to quaternary structure, homodimer. Zn(2+) serves as cofactor. It depends on Co(2+) as a cofactor.

It carries out the reaction N-succinyl-(2S,6S)-2,6-diaminopimelate + H2O = (2S,6S)-2,6-diaminopimelate + succinate. Its pathway is amino-acid biosynthesis; L-lysine biosynthesis via DAP pathway; LL-2,6-diaminopimelate from (S)-tetrahydrodipicolinate (succinylase route): step 3/3. Functionally, catalyzes the hydrolysis of N-succinyl-L,L-diaminopimelic acid (SDAP), forming succinate and LL-2,6-diaminopimelate (DAP), an intermediate involved in the bacterial biosynthesis of lysine and meso-diaminopimelic acid, an essential component of bacterial cell walls. The chain is Succinyl-diaminopimelate desuccinylase from Delftia acidovorans (strain DSM 14801 / SPH-1).